The primary structure comprises 394 residues: GDNF family receptor alpha-like (394 aa).

The N-terminal stretch at 1–18 (MIVFIFLAMGLSLENEYT) is a signal peptide. Over 19 to 351 (SQTNNCTYLR…TGFHSPFNGE (333 aa)) the chain is Extracellular. N-linked (GlcNAc...) asparagine glycans are attached at residues asparagine 23, asparagine 50, asparagine 62, asparagine 67, asparagine 103, and asparagine 116. 11 disulfide bridges follow: cysteine 131–cysteine 189, cysteine 138–cysteine 144, cysteine 155–cysteine 167, cysteine 162–cysteine 210, cysteine 191–cysteine 198, cysteine 220–cysteine 291, cysteine 227–cysteine 233, cysteine 244–cysteine 275, cysteine 252–cysteine 258, cysteine 269–cysteine 316, and cysteine 293–cysteine 304. A required for interaction with GDF15 region spans residues 149 to 228 (ASYLKACSAN…TCLSVIRSCQ (80 aa)). Residues 352–371 (VIYAAMCMTVTCGILLLVMV) traverse the membrane as a helical segment. The Cytoplasmic segment spans residues 372-394 (KLRTSRISSKARDPSSIQIPGEL).

This sequence belongs to the GDNFR family. As to quaternary structure, interacts (via the extracellular domain) with GDF15 and RET; receptor of GDF15, mediates cellular signaling through interaction with RET after GDF15-binding. Interaction with RET requires previous GDF15-binding. In terms of processing, cleaved and inactivated by MMP14, inhibiting the GDF15-GFRAL aversive response. As to expression, expressed in the brainstem, restricted to cells in the area postrema and the immediately adjacent region of the nucleus tractus solitarius (at protein level). Detected at low levels in testis and adipose tissue.

Its subcellular location is the cell membrane. Its activity is regulated as follows. Specifically inhibited by 3P10 monoclonal antibody. Strongly activated by LY3463251, a long-acting and stable agonist composed of GDF15 conjugated monomeric human IgG4 Fc. Brainstem-restricted receptor for GDF15 hormone, which triggers an aversive response, characterized by nausea, vomiting, and/or loss of appetite in response to various stresses. The aversive response is both required to reduce continuing exposure to those stresses at the time of exposure and to promote avoidance behavior in the future. The GDF15-GFRAL aversive response is triggered by stresses, such as anticancer drugs (camptothecin or cisplatin), cancers or drugs such as metformin. Upon interaction with its ligand, GDF15, mediates the GDF15-induced autophosphorylation and activation of the RET tyrosine kinase receptor, leading to activation of MAPK- and AKT- signaling pathways. Ligand-binding activates GFRAL-expressing neurons localized in the area postrema and nucleus tractus solitarius of the brainstem. The GDF15-GFRAL signal induces expression of genes involved in metabolism, such as lipid metabolism in adipose tissues. The chain is GDNF family receptor alpha-like from Homo sapiens (Human).